The sequence spans 261 residues: Indole-3-glycerol phosphate synthase (261 aa).

This sequence belongs to the TrpC family.

It carries out the reaction 1-(2-carboxyphenylamino)-1-deoxy-D-ribulose 5-phosphate + H(+) = (1S,2R)-1-C-(indol-3-yl)glycerol 3-phosphate + CO2 + H2O. It participates in amino-acid biosynthesis; L-tryptophan biosynthesis; L-tryptophan from chorismate: step 4/5. This Burkholderia thailandensis (strain ATCC 700388 / DSM 13276 / CCUG 48851 / CIP 106301 / E264) protein is Indole-3-glycerol phosphate synthase.